A 736-amino-acid chain; its full sequence is MPDHDSTALLSRQTKRRRVDIGVKRTVGTASAFFAKARATFFSAMNPQGSEQDVEYSVVQHADGEKPNVLRKLLKRANSYEDAMMPFPGATIISQLLKNNMNKNGGTEPSFQASGLSSTGSEVHQEDVCSNSSRDSPQECLSPFGRPTMSQFDVDRLCDEHLRAKRARVENIIRGMSHSPRVALRGNENEREIRPQSVSPRESYRENKRKQNWPQQQQQSFQQLVSARKEQKREERRQLKQQLEDMQKQLRQLQEEFYQIYDSTDSENDEDGNLSEDRMRSETVDAQAGDSVGRSDNEMCELDPGQFIDRARALIREQEIGENKPKREGPKEKDQGPNSFHPEGKHLAETLKQELNTAMSQVVDTVVKVFSSKPSRQLPQVFPPLQIPQARFAVNGENHNFHTANQRLQCFGDVIIPNPLDTFSSVPMPGATDQTDALPLVVRKNSSDQPASAPPAGGHHASLHQSPLSATAGFSTSSFRHPFPLPLMAYPFQSPLGAPSASFPGKERASPESLDLTRETTSLRTKMSSHHMNHHPCSPAHPPSAAEGLSLSLIKSECGDLQDMSEISPYSGSAMQEGLSPNHLKKAKLMFFYTRYPSSNMLKTYFSDVKFNRCITSQLIKWFSNFREFYYIQMEKYARQAINDGVTSTEELSITRDCELYRALNMHYNKANDFEVPERFLEVAQITLREFFNAIIAGKDVDPSWKKAIYKVICKLDSEVPEIFKSPNCLQELLHE.

Residues 103-135 (KNGGTEPSFQASGLSSTGSEVHQEDVCSNSSRD) are compositionally biased toward polar residues. Positions 103–146 (KNGGTEPSFQASGLSSTGSEVHQEDVCSNSSRDSPQECLSPFGR) are disordered. Residues 163-168 (RAKRAR) carry the Nuclear localization signal motif. Disordered stretches follow at residues 180–220 (PRVA…QQQS), 261–301 (YDST…EMCE), 319–344 (EIGE…HPEG), 445–465 (NSSD…SLHQ), and 499–518 (PSAS…DLTR). Residues 264–274 (TDSENDEDGNL) are compositionally biased toward acidic residues. Over residues 319–335 (EIGENKPKREGPKEKDQ) the composition is skewed to basic and acidic residues. Low complexity predominate over residues 450–460 (PASAPPAGGHH). The segment covering 505–518 (GKERASPESLDLTR) has biased composition (basic and acidic residues). A Prospero-type homeo domain is found at 576-634 (QEGLSPNHLKKAKLMFFYTRYPSSNMLKTYFSDVKFNRCITSQLIKWFSNFREFYYIQM). Positions 576-734 (QEGLSPNHLK…KSPNCLQELL (159 aa)) are homeo-Prospero. The Prospero domain maps to 635–734 (EKYARQAIND…KSPNCLQELL (100 aa)).

Belongs to the Prospero homeodomain family. As to expression, expressed most actively in the developing lens and midgut and at lower levels in the developing brain, heart, muscle and retina.

It is found in the nucleus. Its function is as follows. Transcription factor which may be involved in developmental processes such as cell fate determination, gene transcriptional regulation and progenitor cell regulation in a number of organs. May be essential in the development and function of the eye. May play a role in the regulation of the circadian rhythm by repressing the expression of clock genes. This is Prospero homeobox protein 1 (PROX1) from Gallus gallus (Chicken).